Here is a 32-residue protein sequence, read N- to C-terminus: Ribulose bisphosphate carboxylase/oxygenase activase, chloroplastic (32 aa).

Residues 13–32 form a disordered region; the sequence is FGALREGPPTFEQPAMTIEK.

Belongs to the RuBisCO activase family.

It localises to the plastid. The protein resides in the chloroplast stroma. Functionally, activation of RuBisCO (ribulose-1,5-bisphosphate carboxylase/oxygenase; EC 4.1.1.39) involves the ATP-dependent carboxylation of the epsilon-amino group of lysine leading to a carbamate structure. This chain is Ribulose bisphosphate carboxylase/oxygenase activase, chloroplastic, found in Populus euphratica (Euphrates poplar).